A 230-amino-acid chain; its full sequence is Prolactin-3D1 (230 aa).

Positions methionine 1 to alanine 29 are cleaved as a signal peptide. Intrachain disulfides connect cysteine 81/cysteine 200 and cysteine 217/cysteine 225. Residues asparagine 109 and asparagine 158 are each glycosylated (N-linked (GlcNAc...) asparagine).

The protein belongs to the somatotropin/prolactin family.

It is found in the secreted. This chain is Prolactin-3D1 (Prl3d1), found in Rattus norvegicus (Rat).